A 302-amino-acid chain; its full sequence is 33 kDa chaperonin (302 aa).

Cystine bridges form between cysteine 247-cysteine 249 and cysteine 280-cysteine 283.

This sequence belongs to the HSP33 family. Post-translationally, under oxidizing conditions two disulfide bonds are formed involving the reactive cysteines. Under reducing conditions zinc is bound to the reactive cysteines and the protein is inactive.

Its subcellular location is the cytoplasm. In terms of biological role, redox regulated molecular chaperone. Protects both thermally unfolding and oxidatively damaged proteins from irreversible aggregation. Plays an important role in the bacterial defense system toward oxidative stress. This Prochlorococcus marinus (strain MIT 9301) protein is 33 kDa chaperonin.